The chain runs to 542 residues: Trans-alpha-bergamotene synthase (542 aa).

Residues D295, D299, D439, T443, and E447 each contribute to the Mg(2+) site. The DDXXD motif signature appears at 295–299; the sequence is DDFYD.

This sequence belongs to the terpene synthase family. It depends on Mg(2+) as a cofactor.

It catalyses the reaction (2E,6E)-farnesyl diphosphate = (1S,5S,6R)-alpha-bergamotene + diphosphate. It participates in secondary metabolite biosynthesis; terpenoid biosynthesis. Its function is as follows. Sesquiterpene synthase converting farnesyl diphosphate to trans-alpha-bergamotene as the major product. The chain is Trans-alpha-bergamotene synthase from Phyla dulcis (Aztec sweet herb).